Here is a 470-residue protein sequence, read N- to C-terminus: 3-isopropylmalate dehydratase large subunit (470 aa).

Residues cysteine 349, cysteine 409, and cysteine 412 each coordinate [4Fe-4S] cluster.

It belongs to the aconitase/IPM isomerase family. LeuC type 1 subfamily. As to quaternary structure, heterodimer of LeuC and LeuD. [4Fe-4S] cluster serves as cofactor.

The enzyme catalyses (2R,3S)-3-isopropylmalate = (2S)-2-isopropylmalate. It participates in amino-acid biosynthesis; L-leucine biosynthesis; L-leucine from 3-methyl-2-oxobutanoate: step 2/4. In terms of biological role, catalyzes the isomerization between 2-isopropylmalate and 3-isopropylmalate, via the formation of 2-isopropylmaleate. This chain is 3-isopropylmalate dehydratase large subunit, found in Methylobacterium radiotolerans (strain ATCC 27329 / DSM 1819 / JCM 2831 / NBRC 15690 / NCIMB 10815 / 0-1).